Reading from the N-terminus, the 305-residue chain is Putative lipid kinase SAS0691 (305 aa).

In terms of domain architecture, DAGKc spans 3–139 (NKYTHGVLFY…YDVIKINNQY (137 aa)). Residues serine 44, 74 to 80 (GDGTVNE), and threonine 101 contribute to the ATP site. Mg(2+)-binding residues include serine 220, aspartate 223, and glutamate 225. Glutamate 281 serves as the catalytic Proton acceptor.

This sequence belongs to the diacylglycerol/lipid kinase family. The cofactor is Mg(2+).

Its function is as follows. May catalyze the ATP-dependent phosphorylation of lipids other than diacylglycerol (DAG). In Staphylococcus aureus (strain MSSA476), this protein is Putative lipid kinase SAS0691.